The following is a 209-amino-acid chain: Guanylate kinase (209 aa).

The Guanylate kinase-like domain occupies 5 to 182; the sequence is GLLIVISGPS…AVTKINSIIV (178 aa). Residue 12 to 19 coordinates ATP; it reads GPSGAGKG.

This sequence belongs to the guanylate kinase family.

It is found in the cytoplasm. The catalysed reaction is GMP + ATP = GDP + ADP. Functionally, essential for recycling GMP and indirectly, cGMP. This Clostridium acetobutylicum (strain ATCC 824 / DSM 792 / JCM 1419 / IAM 19013 / LMG 5710 / NBRC 13948 / NRRL B-527 / VKM B-1787 / 2291 / W) protein is Guanylate kinase.